The following is a 77-amino-acid chain: DNA-directed RNA polymerase subunit omega (77 aa).

Belongs to the RNA polymerase subunit omega family. As to quaternary structure, in cyanobacteria the RNAP catalytic core is composed of 2 alpha, 1 beta, 1 beta', 1 gamma and 1 omega subunit. When a sigma factor is associated with the core the holoenzyme is formed, which can initiate transcription.

The enzyme catalyses RNA(n) + a ribonucleoside 5'-triphosphate = RNA(n+1) + diphosphate. Its function is as follows. Promotes RNA polymerase assembly. Latches the N- and C-terminal regions of the beta' subunit thereby facilitating its interaction with the beta and alpha subunits. This is DNA-directed RNA polymerase subunit omega from Thermosynechococcus vestitus (strain NIES-2133 / IAM M-273 / BP-1).